The sequence spans 101 residues: Large ribosomal subunit protein uL24 (101 aa).

Belongs to the universal ribosomal protein uL24 family. As to quaternary structure, part of the 50S ribosomal subunit.

One of two assembly initiator proteins, it binds directly to the 5'-end of the 23S rRNA, where it nucleates assembly of the 50S subunit. Its function is as follows. One of the proteins that surrounds the polypeptide exit tunnel on the outside of the subunit. The protein is Large ribosomal subunit protein uL24 of Cereibacter sphaeroides (strain ATCC 17029 / ATH 2.4.9) (Rhodobacter sphaeroides).